We begin with the raw amino-acid sequence, 326 residues long: tRNA-dihydrouridine(16) synthase (326 aa).

Residues 8-10 and Q69 contribute to the FMN site; that span reads PME. C99 (proton donor) is an active-site residue. FMN is bound by residues K140, 200 to 202, and 224 to 225; these read NGE and GR.

This sequence belongs to the Dus family. DusC subfamily. Requires FMN as cofactor.

The catalysed reaction is 5,6-dihydrouridine(16) in tRNA + NADP(+) = uridine(16) in tRNA + NADPH + H(+). It catalyses the reaction 5,6-dihydrouridine(16) in tRNA + NAD(+) = uridine(16) in tRNA + NADH + H(+). Its function is as follows. Catalyzes the synthesis of 5,6-dihydrouridine (D), a modified base found in the D-loop of most tRNAs, via the reduction of the C5-C6 double bond in target uridines. Specifically modifies U16 in tRNAs. This Ralstonia nicotianae (strain ATCC BAA-1114 / GMI1000) (Ralstonia solanacearum) protein is tRNA-dihydrouridine(16) synthase.